Here is a 206-residue protein sequence, read N- to C-terminus: Protein Ta0236 (206 aa).

The AMMECR1 domain maps to 16–205 (DIGTKAVRLA…EKDPEGVVEK (190 aa)).

This is Protein Ta0236 from Thermoplasma acidophilum (strain ATCC 25905 / DSM 1728 / JCM 9062 / NBRC 15155 / AMRC-C165).